The chain runs to 297 residues: HTH-type transcriptional regulator PerR (297 aa).

The region spanning 7-64 is the HTH lysR-type domain; the sequence is APLNLLRAFEAAGRTGAFALAASELELSPSAISHAIRKLENLLDVRLFQRSTREITLT. A DNA-binding region (H-T-H motif) is located at residues 24–44; the sequence is FALAASELELSPSAISHAIRK.

The protein belongs to the LysR transcriptional regulatory family.

Functionally, apparent regulatory gene involved in peroxide resistance in stationary phase. The sequence is that of HTH-type transcriptional regulator PerR (perR) from Escherichia coli (strain K12).